Reading from the N-terminus, the 205-residue chain is Endoribonuclease YbeY (205 aa).

Zn(2+) contacts are provided by H124, H128, and H134. Residues 162 to 205 (GTAPVAPGGEAQVPNEALETSGKRQDHSLGEILPGGMSRRLAGS) are disordered.

This sequence belongs to the endoribonuclease YbeY family. Zn(2+) serves as cofactor.

The protein localises to the cytoplasm. Functionally, single strand-specific metallo-endoribonuclease involved in late-stage 70S ribosome quality control and in maturation of the 3' terminus of the 16S rRNA. This is Endoribonuclease YbeY from Beijerinckia indica subsp. indica (strain ATCC 9039 / DSM 1715 / NCIMB 8712).